A 790-amino-acid chain; its full sequence is Lon protease (790 aa).

Positions 23-220 (LPIMPIFHTV…EITLIVNHQL (198 aa)) constitute a Lon N-terminal domain. ATP is bound at residue 372–379 (GPPGTGKT). Residues 608–789 (ISKPGIAMGL…REVLNIALSR (182 aa)) enclose the Lon proteolytic domain. Catalysis depends on residues Ser695 and Lys738.

This sequence belongs to the peptidase S16 family. In terms of assembly, homohexamer. Organized in a ring with a central cavity.

Its subcellular location is the cytoplasm. It carries out the reaction Hydrolysis of proteins in presence of ATP.. ATP-dependent serine protease that mediates the selective degradation of mutant and abnormal proteins as well as certain short-lived regulatory proteins. Required for cellular homeostasis and for survival from DNA damage and developmental changes induced by stress. Degrades polypeptides processively to yield small peptide fragments that are 5 to 10 amino acids long. Binds to DNA in a double-stranded, site-specific manner. The polypeptide is Lon protease (Syntrophus aciditrophicus (strain SB)).